A 182-amino-acid chain; its full sequence is Probable RNA 2'-phosphotransferase (182 aa).

The protein belongs to the KptA/TPT1 family.

In terms of biological role, removes the 2'-phosphate from RNA via an intermediate in which the phosphate is ADP-ribosylated by NAD followed by a presumed transesterification to release the RNA and generate ADP-ribose 1''-2''-cyclic phosphate (APPR&gt;P). May function as an ADP-ribosylase. The polypeptide is Probable RNA 2'-phosphotransferase (Pseudomonas paraeruginosa (strain DSM 24068 / PA7) (Pseudomonas aeruginosa (strain PA7))).